The sequence spans 338 residues: Methionine import ATP-binding protein MetN 2 (338 aa).

The ABC transporter domain maps to 2–242 (IQLEGVSVDF…PQHAFTRQLV (241 aa)). 39-46 (GTSGAGKS) is an ATP binding site.

This sequence belongs to the ABC transporter superfamily. Methionine importer (TC 3.A.1.24) family. The complex is composed of two ATP-binding proteins (MetN), two transmembrane proteins (MetI) and a solute-binding protein (MetQ).

The protein resides in the cell inner membrane. The catalysed reaction is L-methionine(out) + ATP + H2O = L-methionine(in) + ADP + phosphate + H(+). It catalyses the reaction D-methionine(out) + ATP + H2O = D-methionine(in) + ADP + phosphate + H(+). Functionally, part of the ABC transporter complex MetNIQ involved in methionine import. Responsible for energy coupling to the transport system. The protein is Methionine import ATP-binding protein MetN 2 of Pectobacterium atrosepticum (strain SCRI 1043 / ATCC BAA-672) (Erwinia carotovora subsp. atroseptica).